A 566-amino-acid chain; its full sequence is F-box/WD repeat-containing protein 5 (566 aa).

One can recognise an F-box domain in the interval 3 to 49 (EGGTPLLPDSLVYQIFLSLGPADVLAAGLVCRQWQAVSRDEFLWREQ). WD repeat units lie at residues 83–125 (VEVQ…DLTI), 126–178 (SLLH…LDSF), 179–238 (ALLS…VKRL), and 239–281 (FKIQ…RIFD). Ser-151 carries the post-translational modification Phosphoserine; by PLK4. Residue Ser-284 is modified to Phosphoserine. The D-box signature appears at 303–311 (RHFLDRVLE). 3 WD repeats span residues 394-447 (ALDH…DLLV), 458-501 (RALR…RHYN), and 502-539 (ICLA…KAWR).

The protein belongs to the FBXW5 family. As to quaternary structure, part of the SCF (SKP1-CUL1-F-box) E3 ubiquitin-protein ligase complex SCF(FBXW5) composed of CUL1, SKP1, RBX1 and FBXW5. Component of the DCX(FBXW5) E3 ubiquitin ligase complex, at least composed of (CUL4A or CUL4B), DDB1, FBXW5 and RBX1. Interacts with CDC20, EPS8, TSC1, TSC2 and SASS6. Interacts with TNFAIP8L1; TNFAIP8L1 competes with TSC2 to bind FBXW5 increasing TSC2 stability by preventing its ubiquitination. Phosphorylated at Ser-151 by PLK4 during the G1/S transition, leading to inhibit its ability to ubiquitinate SASS6. In terms of processing, ubiquitinated and degraded by the APC/C complex during mitosis and G1 phase.

It localises to the cytoplasm. It functions in the pathway protein modification; protein ubiquitination. Functionally, substrate recognition component of both SCF (SKP1-CUL1-F-box protein) and DCX (DDB1-CUL4-X-box) E3 ubiquitin-protein ligase complexes. Substrate recognition component of the SCF(FBXW5) E3 ubiquitin-protein ligase complex which mediates the ubiquitination and subsequent proteasomal degradation of SASS6 during S phase, leading to prevent centriole reduplication. The SCF(FBXW5) complex also mediates ubiquitination and degradation of actin-regulator EPS8 during G2 phase, leading to the transient degradation of EPS8 and subsequent cell shape changes required to allow mitotic progression. Substrate-specific adapter of the DCX(FBXW5) E3 ubiquitin-protein ligase complex which mediates the polyubiquitination and subsequent degradation of TSC2. May also act as a negative regulator of MAP3K7/TAK1 signaling in the interleukin-1B (IL1B) signaling pathway. The protein is F-box/WD repeat-containing protein 5 (FBXW5) of Homo sapiens (Human).